Here is a 119-residue protein sequence, read N- to C-terminus: MSRVKRGVTARARHKKVLDQAKGYRGRRKNVYRIAKQAVMKAGQYAYRDRRQRKRQFRALWIARINAAAREVGLTYSTFMNGLKKAAIEVDRKVLADLAVFDKPAFAALADQARAKLAA.

The protein belongs to the bacterial ribosomal protein bL20 family.

Its function is as follows. Binds directly to 23S ribosomal RNA and is necessary for the in vitro assembly process of the 50S ribosomal subunit. It is not involved in the protein synthesizing functions of that subunit. This chain is Large ribosomal subunit protein bL20, found in Aromatoleum aromaticum (strain DSM 19018 / LMG 30748 / EbN1) (Azoarcus sp. (strain EbN1)).